We begin with the raw amino-acid sequence, 137 residues long: Nucleoside diphosphate kinase (137 aa).

Residues Lys-9, Phe-57, Arg-85, Thr-91, Arg-102, and Asn-112 each coordinate ATP. Residue His-115 is the Pros-phosphohistidine intermediate of the active site.

Belongs to the NDK family. As to quaternary structure, homotetramer. Mg(2+) serves as cofactor.

The protein localises to the cytoplasm. The catalysed reaction is a 2'-deoxyribonucleoside 5'-diphosphate + ATP = a 2'-deoxyribonucleoside 5'-triphosphate + ADP. The enzyme catalyses a ribonucleoside 5'-diphosphate + ATP = a ribonucleoside 5'-triphosphate + ADP. In terms of biological role, major role in the synthesis of nucleoside triphosphates other than ATP. The ATP gamma phosphate is transferred to the NDP beta phosphate via a ping-pong mechanism, using a phosphorylated active-site intermediate. In Campylobacter jejuni subsp. jejuni serotype O:23/36 (strain 81-176), this protein is Nucleoside diphosphate kinase.